Reading from the N-terminus, the 344-residue chain is Anthranilate phosphoribosyltransferase (344 aa).

5-phospho-alpha-D-ribose 1-diphosphate-binding positions include G80, 83 to 84 (GD), T88, 90 to 93 (NIST), 108 to 116 (KHGNRSVSS), and S120. Residue G80 participates in anthranilate binding. Residue S92 coordinates Mg(2+). N111 contributes to the anthranilate binding site. Anthranilate is bound at residue R166. 2 residues coordinate Mg(2+): D225 and E226.

This sequence belongs to the anthranilate phosphoribosyltransferase family. Homodimer. Mg(2+) is required as a cofactor.

It carries out the reaction N-(5-phospho-beta-D-ribosyl)anthranilate + diphosphate = 5-phospho-alpha-D-ribose 1-diphosphate + anthranilate. Its pathway is amino-acid biosynthesis; L-tryptophan biosynthesis; L-tryptophan from chorismate: step 2/5. In terms of biological role, catalyzes the transfer of the phosphoribosyl group of 5-phosphorylribose-1-pyrophosphate (PRPP) to anthranilate to yield N-(5'-phosphoribosyl)-anthranilate (PRA). The polypeptide is Anthranilate phosphoribosyltransferase (Petrotoga mobilis (strain DSM 10674 / SJ95)).